Reading from the N-terminus, the 713-residue chain is Probable arginine--tRNA ligase, cytoplasmic (713 aa).

The interval 74–113 (KNKKNGVKATSTSSPSSSTSAPAEKKAKKDGKTGGAPPKQ) is disordered. The segment covering 81–95 (KATSTSSPSSSTSAP) has biased composition (low complexity). The segment covering 96–105 (AEKKAKKDGK) has biased composition (basic and acidic residues). L-arginine contacts are provided by residues 252 to 254 (SPN), histidine 263, tyrosine 438, aspartate 442, and glutamine 466. Residues 252–263 (SPNIAKEMHVGH) carry the 'HIGH' region motif. Positions 583–597 (NTAVYLLYAYTRIQS) are interaction with tRNA.

It belongs to the class-I aminoacyl-tRNA synthetase family.

The protein localises to the cytoplasm. It localises to the cytosol. The enzyme catalyses tRNA(Arg) + L-arginine + ATP = L-arginyl-tRNA(Arg) + AMP + diphosphate. Functionally, forms part of a macromolecular complex that catalyzes the attachment of specific amino acids to cognate tRNAs during protein synthesis. This Caenorhabditis elegans protein is Probable arginine--tRNA ligase, cytoplasmic.